A 157-amino-acid chain; its full sequence is Small ribosomal subunit protein uS7 (157 aa).

This sequence belongs to the universal ribosomal protein uS7 family. As to quaternary structure, part of the 30S ribosomal subunit. Contacts proteins S9 and S11.

Functionally, one of the primary rRNA binding proteins, it binds directly to 16S rRNA where it nucleates assembly of the head domain of the 30S subunit. Is located at the subunit interface close to the decoding center, probably blocks exit of the E-site tRNA. The chain is Small ribosomal subunit protein uS7 from Polaromonas sp. (strain JS666 / ATCC BAA-500).